Consider the following 55-residue polypeptide: MASANRVKIGLKCAECNDINYTTTKNSKTTTEKLELKKYCPRLKKHTVHKEVKLK.

This sequence belongs to the bacterial ribosomal protein bL33 family.

This is Large ribosomal subunit protein bL33 from Campylobacter fetus subsp. fetus (strain 82-40).